The primary structure comprises 181 residues: Ribosome maturation factor RimP (181 aa).

Belongs to the RimP family.

It is found in the cytoplasm. In terms of biological role, required for maturation of 30S ribosomal subunits. This chain is Ribosome maturation factor RimP, found in Mycolicibacterium smegmatis (strain ATCC 700084 / mc(2)155) (Mycobacterium smegmatis).